The sequence spans 282 residues: Putative SWIB domain-containing protein 070L (282 aa).

Over residues 1–16 the composition is skewed to low complexity; the sequence is MFQTTPKQVKPTTVPK. The interval 1–21 is disordered; sequence MFQTTPKQVKPTTVPKTGRKN. An SWIB/MDM2 domain is found at 97–181; it reads GLEKPRMISE…QKYLKHCFDE (85 aa). Residues 199-282 are disordered; sequence TDDQTTAEEA…KVKKEHKIKK (84 aa). The span at 262–275 shows a compositional bias: basic and acidic residues; that stretch reads GKKDKENIPLEKVK.

It belongs to the IIV-6 306R family.

This is Putative SWIB domain-containing protein 070L from Invertebrate iridescent virus 3 (IIV-3).